A 689-amino-acid polypeptide reads, in one-letter code: Glycine--tRNA ligase beta subunit (689 aa).

Belongs to the class-II aminoacyl-tRNA synthetase family. As to quaternary structure, tetramer of two alpha and two beta subunits.

Its subcellular location is the cytoplasm. The catalysed reaction is tRNA(Gly) + glycine + ATP = glycyl-tRNA(Gly) + AMP + diphosphate. In Shewanella woodyi (strain ATCC 51908 / MS32), this protein is Glycine--tRNA ligase beta subunit.